The primary structure comprises 143 residues: MFLGSHTPRLDDKGRLTLPAKFRDELEGGLVITKGQERCLYVFPMAEFTRISESLRTAPVTAKALRDYSRVFFSSAADDAPDRQGRITIPAPLRTYAGLTRDCVVNGANTRVEIWDAQRWQAYLESQEESFAELSEEVLPGVI.

SpoVT-AbrB domains are found at residues 5–47 (SHTP…PMAE) and 76–119 (AADD…DAQR).

This sequence belongs to the MraZ family. Forms oligomers.

Its subcellular location is the cytoplasm. The protein localises to the nucleoid. The sequence is that of Transcriptional regulator MraZ from Frankia alni (strain DSM 45986 / CECT 9034 / ACN14a).